Consider the following 167-residue polypeptide: Transmembrane protein 229B (167 aa).

Residues 1–14 (MASAEPLTALSRWY) lie on the Cytoplasmic side of the membrane. Residues 15 to 35 (LYAIHGYFCEVMFTAAWEFVV) traverse the membrane as a helical segment. Over 36–40 (NFNWK) the chain is Extracellular. Residues 41 to 61 (FPGVTSVWALFIYGTSILIVE) traverse the membrane as a helical segment. Topologically, residues 62–73 (RMYLRLRGRCPL) are cytoplasmic. A helical transmembrane segment spans residues 74-94 (LVRCVIYTLWTYLWEFTTGFI). Residues 95–109 (LRQFNACPWDYSQFD) lie on the Extracellular side of the membrane. The helical transmembrane segment at 110–130 (FDFMGLITLEYAVPWFCGALI) threads the bilayer. Topologically, residues 131 to 167 (MEQFIIRNTLRLRFDKDAEPGEPASPPALANGHVKTD) are cytoplasmic. The disordered stretch occupies residues 148–167 (AEPGEPASPPALANGHVKTD).

It belongs to the TMEM229 family.

The protein resides in the membrane. In Mus musculus (Mouse), this protein is Transmembrane protein 229B (TMEM229B).